The chain runs to 196 residues: Pyridoxal 5'-phosphate synthase subunit PdxT (196 aa).

47–49 (GES) lines the L-glutamine pocket. Cysteine 79 serves as the catalytic Nucleophile. L-glutamine is bound by residues arginine 106 and 134 to 135 (IR). Residues histidine 170 and glutamate 172 each act as charge relay system in the active site.

Belongs to the glutaminase PdxT/SNO family. In the presence of PdxS, forms a dodecamer of heterodimers. Only shows activity in the heterodimer.

It catalyses the reaction aldehydo-D-ribose 5-phosphate + D-glyceraldehyde 3-phosphate + L-glutamine = pyridoxal 5'-phosphate + L-glutamate + phosphate + 3 H2O + H(+). It carries out the reaction L-glutamine + H2O = L-glutamate + NH4(+). It functions in the pathway cofactor biosynthesis; pyridoxal 5'-phosphate biosynthesis. Functionally, catalyzes the hydrolysis of glutamine to glutamate and ammonia as part of the biosynthesis of pyridoxal 5'-phosphate. The resulting ammonia molecule is channeled to the active site of PdxS. This is Pyridoxal 5'-phosphate synthase subunit PdxT from Bacillus pumilus (strain SAFR-032).